We begin with the raw amino-acid sequence, 374 residues long: Eukaryotic translation initiation factor 3 subunit M (374 aa).

An N-acetylserine modification is found at Ser-2. Phosphoserine is present on residues Ser-2 and Ser-152. Residues 180 to 339 (AASKVMVELL…RKVVVSHSTH (160 aa)) form the PCI domain. An N6-acetyllysine modification is found at Lys-254. The interval 344–374 (KQQWQQLYDTLNAWKQNLNKVKNSLLSLSDT) is interaction with HSV-1 and HSV-2. Ser-367 carries the phosphoserine modification.

Component of the eukaryotic translation initiation factor 3 (eIF-3) complex, which is composed of 13 subunits: EIF3A, EIF3B, EIF3C, EIF3D, EIF3E, EIF3F, EIF3G, EIF3H, EIF3I, EIF3J, EIF3K, EIF3L and EIF3M. The eIF-3 complex appears to include 3 stable modules: module A is composed of EIF3A, EIF3B, EIF3G and EIF3I; module B is composed of EIF3F, EIF3H, and EIF3M; and module C is composed of EIF3C, EIF3D, EIF3E, EIF3K and EIF3L. EIF3C of module C binds EIF3B of module A and EIF3H of module B, thereby linking the three modules. EIF3J is a labile subunit that binds to the eIF-3 complex via EIF3B. The eIF-3 complex interacts with RPS6KB1 under conditions of nutrient depletion. Mitogenic stimulation leads to binding and activation of a complex composed of MTOR and RPTOR, leading to phosphorylation and release of RPS6KB1 and binding of EIF4B to eIF-3. As to expression, broadly expressed.

The protein localises to the cytoplasm. Its function is as follows. Component of the eukaryotic translation initiation factor 3 (eIF-3) complex, which is required for several steps in the initiation of protein synthesis. The eIF-3 complex associates with the 40S ribosome and facilitates the recruitment of eIF-1, eIF-1A, eIF-2:GTP:methionyl-tRNAi and eIF-5 to form the 43S pre-initiation complex (43S PIC). The eIF-3 complex stimulates mRNA recruitment to the 43S PIC and scanning of the mRNA for AUG recognition. The eIF-3 complex is also required for disassembly and recycling of post-termination ribosomal complexes and subsequently prevents premature joining of the 40S and 60S ribosomal subunits prior to initiation. The eIF-3 complex specifically targets and initiates translation of a subset of mRNAs involved in cell proliferation, including cell cycling, differentiation and apoptosis, and uses different modes of RNA stem-loop binding to exert either translational activation or repression. Functionally, (Microbial infection) May favor virus entry in case of infection with herpes simplex virus 1 (HSV1) or herpes simplex virus 2 (HSV2). The chain is Eukaryotic translation initiation factor 3 subunit M from Homo sapiens (Human).